The sequence spans 79 residues: MKLTCMMIVAVLFLTAWTFVTADDSRNGLEYLFPKAHYEMNPEASKLNKKEDCEAGGRFCGFPKIGEPCCSGWCFFVCA.

The signal sequence occupies residues 1–22; sequence MKLTCMMIVAVLFLTAWTFVTA. Positions 23-48 are excised as a propeptide; the sequence is DDSRNGLEYLFPKAHYEMNPEASKLN. Intrachain disulfides connect cysteine 53–cysteine 70, cysteine 60–cysteine 74, and cysteine 69–cysteine 78.

The protein belongs to the conotoxin O1 superfamily. Expressed by the venom duct.

It is found in the secreted. This Conus ventricosus (Mediterranean cone) protein is Conotoxin VnMKLT1-01121.